The sequence spans 475 residues: Ribulose bisphosphate carboxylase large chain (475 aa).

Positions 1–2 are excised as a propeptide; the sequence is MS. The residue at position 3 (Pro-3) is an N-acetylproline. N6,N6,N6-trimethyllysine is present on Lys-14. Substrate is bound by residues Asn-123 and Thr-173. Catalysis depends on Lys-175, which acts as the Proton acceptor. Lys-177 serves as a coordination point for substrate. Residues Lys-201, Asp-203, and Glu-204 each coordinate Mg(2+). At Lys-201 the chain carries N6-carboxylysine. His-294 serves as the catalytic Proton acceptor. 3 residues coordinate substrate: Arg-295, His-327, and Ser-379.

The protein belongs to the RuBisCO large chain family. Type I subfamily. Heterohexadecamer of 8 large chains and 8 small chains; disulfide-linked. The disulfide link is formed within the large subunit homodimers. Requires Mg(2+) as cofactor. Post-translationally, the disulfide bond which can form in the large chain dimeric partners within the hexadecamer appears to be associated with oxidative stress and protein turnover.

The protein localises to the plastid. The protein resides in the chloroplast. It carries out the reaction 2 (2R)-3-phosphoglycerate + 2 H(+) = D-ribulose 1,5-bisphosphate + CO2 + H2O. The catalysed reaction is D-ribulose 1,5-bisphosphate + O2 = 2-phosphoglycolate + (2R)-3-phosphoglycerate + 2 H(+). Functionally, ruBisCO catalyzes two reactions: the carboxylation of D-ribulose 1,5-bisphosphate, the primary event in carbon dioxide fixation, as well as the oxidative fragmentation of the pentose substrate in the photorespiration process. Both reactions occur simultaneously and in competition at the same active site. The sequence is that of Ribulose bisphosphate carboxylase large chain from Plumbago auriculata (Cape leadwort).